A 409-amino-acid chain; its full sequence is N-carbamoyl-L-amino acid amidohydrolase (409 aa).

A divalent metal cation-binding residues include H79, D90, E125, and H189. An N-carbamoyl-L-alpha-amino acid is bound by residues Q192, H225, N273, R286, and A355. An involved in dimerization region spans residues 208–325; the sequence is GIAGLIWVKF…TTERLQEMAP (118 aa). H380 is an a divalent metal cation binding site.

Belongs to the peptidase M20 family. In terms of assembly, homodimer. Mn(2+) serves as cofactor. Requires Ni(2+) as cofactor. It depends on Co(2+) as a cofactor. Fe(2+) is required as a cofactor.

The catalysed reaction is an N-carbamoyl-L-alpha-amino acid + H2O + 2 H(+) = an L-alpha-amino acid + NH4(+) + CO2. It catalyses the reaction N-carbamoyl-L-methionine + H2O + 2 H(+) = L-methionine + NH4(+) + CO2. The enzyme catalyses N-acetyl-L-methionine + H2O = L-methionine + acetate. It carries out the reaction N-carbamoyl-L-alanine + H2O + 2 H(+) = L-alanine + NH4(+) + CO2. The catalysed reaction is N-carbamoyl-L-glutamate + H2O + 2 H(+) = L-glutamate + NH4(+) + CO2. It catalyses the reaction N-carbamoylglycine + H2O + 2 H(+) = glycine + NH4(+) + CO2. The enzyme catalyses N-carbamoyl-L-leucine + H2O + 2 H(+) = L-leucine + NH4(+) + CO2. In terms of biological role, catalyzes the hydrolysis of aliphatic N-carbamoyl-L-alpha-amino acids to free L-alpha-amino acids. Is strictly L-specific since it is inactive toward N-carbamoyl-D-alpha-amino acids. Is not able to use aromatic N-carbamoyl-L-alpha-amino acids like N-carbamoyl-L-tryptophan and N-carbamoyl-L-phenylalanine as substrates, but is also able to hydrolyze N-acetyl-L-methionine. The polypeptide is N-carbamoyl-L-amino acid amidohydrolase (Geobacillus stearothermophilus (Bacillus stearothermophilus)).